The primary structure comprises 399 residues: Glucose-1-phosphate adenylyltransferase (399 aa).

Residues Tyr-100, Gly-165, 180-181 (EK), and Ser-191 each bind alpha-D-glucose 1-phosphate.

It belongs to the bacterial/plant glucose-1-phosphate adenylyltransferase family. In terms of assembly, homotetramer.

It carries out the reaction alpha-D-glucose 1-phosphate + ATP + H(+) = ADP-alpha-D-glucose + diphosphate. It functions in the pathway glycan biosynthesis; glycogen biosynthesis. In terms of biological role, involved in the biosynthesis of ADP-glucose, a building block required for the elongation reactions to produce glycogen. Catalyzes the reaction between ATP and alpha-D-glucose 1-phosphate (G1P) to produce pyrophosphate and ADP-Glc. The protein is Glucose-1-phosphate adenylyltransferase of Desulforamulus reducens (strain ATCC BAA-1160 / DSM 100696 / MI-1) (Desulfotomaculum reducens).